Here is a 132-residue protein sequence, read N- to C-terminus: uncharacterized protein (132 aa).

Transmembrane regions (helical) follow at residues 12–32 (VIGF…KKLY) and 37–57 (LTLA…IPVL).

Its subcellular location is the cell membrane. This is an uncharacterized protein from Methanocaldococcus jannaschii (strain ATCC 43067 / DSM 2661 / JAL-1 / JCM 10045 / NBRC 100440) (Methanococcus jannaschii).